Consider the following 158-residue polypeptide: Ribosome maturation factor RimP (158 aa).

Belongs to the RimP family.

It is found in the cytoplasm. Its function is as follows. Required for maturation of 30S ribosomal subunits. This chain is Ribosome maturation factor RimP, found in Streptococcus suis (strain 05ZYH33).